Here is a 277-residue protein sequence, read N- to C-terminus: 2-dehydro-3-deoxyphosphooctonate aldolase (277 aa).

The protein belongs to the KdsA family.

The protein localises to the cytoplasm. It carries out the reaction D-arabinose 5-phosphate + phosphoenolpyruvate + H2O = 3-deoxy-alpha-D-manno-2-octulosonate-8-phosphate + phosphate. The protein operates within carbohydrate biosynthesis; 3-deoxy-D-manno-octulosonate biosynthesis; 3-deoxy-D-manno-octulosonate from D-ribulose 5-phosphate: step 2/3. It participates in bacterial outer membrane biogenesis; lipopolysaccharide biosynthesis. This chain is 2-dehydro-3-deoxyphosphooctonate aldolase (kdsA), found in Mesorhizobium japonicum (strain LMG 29417 / CECT 9101 / MAFF 303099) (Mesorhizobium loti (strain MAFF 303099)).